The following is a 412-amino-acid chain: Probable tRNA pseudouridine synthase D (412 aa).

The active-site Nucleophile is the D97. The TRUD domain occupies 167-370 (ALPNYYGYQR…YGSYRRARLQ (204 aa)).

This sequence belongs to the pseudouridine synthase TruD family.

It catalyses the reaction uridine(13) in tRNA = pseudouridine(13) in tRNA. Functionally, could be responsible for synthesis of pseudouridine from uracil-13 in transfer RNAs. The polypeptide is Probable tRNA pseudouridine synthase D (Pyrobaculum neutrophilum (strain DSM 2338 / JCM 9278 / NBRC 100436 / V24Sta) (Thermoproteus neutrophilus)).